A 227-amino-acid chain; its full sequence is RNA-free ribonuclease P (227 aa).

It belongs to the HARP family.

It carries out the reaction Endonucleolytic cleavage of RNA, removing 5'-extranucleotides from tRNA precursor.. In terms of biological role, RNA-free RNase P that catalyzes the removal of the 5'-leader sequence from pre-tRNA to produce the mature 5'-terminus. The chain is RNA-free ribonuclease P from Archaeoglobus fulgidus (strain ATCC 49558 / DSM 4304 / JCM 9628 / NBRC 100126 / VC-16).